A 673-amino-acid polypeptide reads, in one-letter code: UvrABC system protein B (673 aa).

One can recognise a Helicase ATP-binding domain in the interval 26–183 (EGLEDGLAHQ…RRLAELQYTR (158 aa)). 39 to 46 (GVTGSGKT) provides a ligand contact to ATP. Positions 92–115 (YYDYYQPEAYVPSSDTFIEKDASV) match the Beta-hairpin motif. Residues 431 to 597 (QVDDLLSEIR…GLNKKVVDIL (167 aa)) enclose the Helicase C-terminal domain. The UVR domain occupies 633 to 668 (QQKIHELEGQMMQHAQNLEFEEAAQIRDQLHQLREL).

It belongs to the UvrB family. In terms of assembly, forms a heterotetramer with UvrA during the search for lesions. Interacts with UvrC in an incision complex.

The protein resides in the cytoplasm. The UvrABC repair system catalyzes the recognition and processing of DNA lesions. A damage recognition complex composed of 2 UvrA and 2 UvrB subunits scans DNA for abnormalities. Upon binding of the UvrA(2)B(2) complex to a putative damaged site, the DNA wraps around one UvrB monomer. DNA wrap is dependent on ATP binding by UvrB and probably causes local melting of the DNA helix, facilitating insertion of UvrB beta-hairpin between the DNA strands. Then UvrB probes one DNA strand for the presence of a lesion. If a lesion is found the UvrA subunits dissociate and the UvrB-DNA preincision complex is formed. This complex is subsequently bound by UvrC and the second UvrB is released. If no lesion is found, the DNA wraps around the other UvrB subunit that will check the other stand for damage. The chain is UvrABC system protein B from Klebsiella pneumoniae (strain 342).